The chain runs to 540 residues: CUB domain-containing protein 2 (540 aa).

The N-terminal stretch at 1–24 (MLAELGACLLLAMVLLDSDPGTQA) is a signal peptide. Residues 25–516 (MEGVKCGGVL…GTMVTQDTSD (492 aa)) lie on the Extracellular side of the membrane. 6 disulfides stabilise this stretch: cysteine 30-cysteine 56, cysteine 83-cysteine 106, cysteine 145-cysteine 171, cysteine 198-cysteine 218, cysteine 257-cysteine 283, and cysteine 314-cysteine 336. 3 consecutive CUB domains span residues 30-143 (CGGV…YQKD), 145-255 (CGGV…YFSG), and 257-373 (CQEV…YIGV). A glycan (N-linked (GlcNAc...) asparagine) is linked at asparagine 40. The N-linked (GlcNAc...) asparagine glycan is linked to asparagine 267. Asparagine 377, asparagine 435, and asparagine 436 each carry an N-linked (GlcNAc...) asparagine glycan. Residues 517–537 (IVFLGLCILAGVLMIIAIVVL) form a helical membrane-spanning segment. At 538 to 540 (MLL) the chain is on the cytoplasmic side.

The protein localises to the membrane. The sequence is that of CUB domain-containing protein 2 (Cdcp2) from Mus musculus (Mouse).